Consider the following 1025-residue polypeptide: Probable outer membrane protein PmpF (1025 aa).

An N-terminal signal peptide occupies residues 1 to 20 (MTRRILPLSLVFIPLSCISA). The segment at 654–681 (NSTETQTANNSIQEQKNTSETFDSNSTT) is disordered. The span at 659–681 (QTANNSIQEQKNTSETFDSNSTT) shows a compositional bias: polar residues. Residues 748–1025 (LLPDDSWFAL…YMNAGGALVF (278 aa)) form the Autotransporter domain.

This sequence belongs to the PMP outer membrane protein family.

The protein resides in the secreted. Its subcellular location is the cell wall. It is found in the cell outer membrane. In Chlamydia muridarum (strain MoPn / Nigg), this protein is Probable outer membrane protein PmpF (pmpF).